We begin with the raw amino-acid sequence, 159 residues long: Protein-export protein SecB (159 aa).

This sequence belongs to the SecB family. Homotetramer, a dimer of dimers. One homotetramer interacts with 1 SecA dimer.

It localises to the cytoplasm. In terms of biological role, one of the proteins required for the normal export of preproteins out of the cell cytoplasm. It is a molecular chaperone that binds to a subset of precursor proteins, maintaining them in a translocation-competent state. It also specifically binds to its receptor SecA. The chain is Protein-export protein SecB from Nitrosospira multiformis (strain ATCC 25196 / NCIMB 11849 / C 71).